The primary structure comprises 589 residues: Proton pump-interactor 2 (589 aa).

Residues 205–245 are a coiled coil; the sequence is EDSLAEKEASINRVKSMAVELNEVKKELDAITWKINHLSDK. Composition is skewed to basic and acidic residues over residues 370–383, 395–408, 426–450, and 504–534; these read KGGEKVHETNREDS, TDKRKKETRKKAMD, VYEKPKKEEEEVDEETLKEREREEQ, and ESDHSQEVTKDLEKVRTLAVSGKEKHQKERS. 2 disordered regions span residues 370-450 and 485-534; these read KGGE…REEQ and KECE…KERS. A coiled-coil region spans residues 431 to 500; the sequence is KKEEEEVDEE…AKKKAAANSS (70 aa). A helical transmembrane segment spans residues 568 to 588; it reads WVWGLSSAALAVALFLVVLLL.

The protein belongs to the plant Proton pump-interactor protein family. Expressed in seedlings and flowers.

The protein localises to the cell membrane. The protein resides in the endoplasmic reticulum membrane. Functionally, may regulate plasma membrane ATPase activity. The sequence is that of Proton pump-interactor 2 (PPI2) from Arabidopsis thaliana (Mouse-ear cress).